The sequence spans 152 residues: Large ribosomal subunit protein bL9 (152 aa).

It belongs to the bacterial ribosomal protein bL9 family.

In terms of biological role, binds to the 23S rRNA. This Saccharophagus degradans (strain 2-40 / ATCC 43961 / DSM 17024) protein is Large ribosomal subunit protein bL9.